The primary structure comprises 347 residues: Magnesium-protoporphyrin IX monomethyl ester [oxidative] cyclase (347 aa).

This sequence belongs to the AcsF family. Requires Fe cation as cofactor.

It catalyses the reaction Mg-protoporphyrin IX 13-monomethyl ester + 3 NADPH + 3 O2 + 2 H(+) = 3,8-divinyl protochlorophyllide a + 3 NADP(+) + 5 H2O. The protein operates within porphyrin-containing compound metabolism; chlorophyll biosynthesis (light-independent). In terms of biological role, catalyzes the formation of the isocyclic ring in chlorophyll biosynthesis. Mediates the cyclase reaction, which results in the formation of divinylprotochlorophyllide (Pchlide) characteristic of all chlorophylls from magnesium-protoporphyrin IX 13-monomethyl ester (MgPMME). The chain is Magnesium-protoporphyrin IX monomethyl ester [oxidative] cyclase from Prochlorococcus marinus (strain SARG / CCMP1375 / SS120).